A 158-amino-acid chain; its full sequence is NADH-quinone oxidoreductase subunit B (158 aa).

4 residues coordinate [4Fe-4S] cluster: C37, C38, C102, and C132.

It belongs to the complex I 20 kDa subunit family. NDH-1 is composed of 14 different subunits. Subunits NuoB, C, D, E, F, and G constitute the peripheral sector of the complex. The cofactor is [4Fe-4S] cluster.

Its subcellular location is the cell inner membrane. It carries out the reaction a quinone + NADH + 5 H(+)(in) = a quinol + NAD(+) + 4 H(+)(out). Its function is as follows. NDH-1 shuttles electrons from NADH, via FMN and iron-sulfur (Fe-S) centers, to quinones in the respiratory chain. Couples the redox reaction to proton translocation (for every two electrons transferred, four hydrogen ions are translocated across the cytoplasmic membrane), and thus conserves the redox energy in a proton gradient. In Legionella pneumophila (strain Corby), this protein is NADH-quinone oxidoreductase subunit B.